Consider the following 370-residue polypeptide: A-type ATP synthase subunit C (370 aa).

It belongs to the V-ATPase V0D/AC39 subunit family. As to quaternary structure, has multiple subunits with at least A(3), B(3), C, D, E, F, H, I and proteolipid K(x).

Its subcellular location is the cell membrane. In terms of biological role, component of the A-type ATP synthase that produces ATP from ADP in the presence of a proton gradient across the membrane. This Pyrococcus furiosus (strain ATCC 43587 / DSM 3638 / JCM 8422 / Vc1) protein is A-type ATP synthase subunit C.